The following is an 809-amino-acid chain: Transitional endoplasmic reticulum ATPase homolog 1 (809 aa).

The segment at 1–21 is disordered; it reads MASVPTHQSEKEKKNDELSTA. Over residues 8–21 the composition is skewed to basic and acidic residues; it reads QSEKEKKNDELSTA. ATP contacts are provided by residues 253–259, Asn-354, His-390, and 527–532; these read PGTGKTL and GCGKTL. Residues 779–809 form a disordered region; the sequence is FGNNFKFPGEQRGSDAPSAPVPAQDDDDLYN. Residues 803-809 form an interaction with ufd-2 region; sequence DDDDLYN.

This sequence belongs to the AAA ATPase family. CDC48 subfamily. As to quaternary structure, homohexamer; oligomerization is ATP-independent. Forms a ring-shaped particle of 18.3 nm diameter, that displays 6-fold radial symmetry. Interacts with cdc-48.2 and thus may form heterohexamers. Forms a complex composed of cdc-48.1, him-6 and crp-1; within the complex, interacts with helicase him-6 and GTPase crp-1. Forms a complex composed of deubiquitinating enzyme atx-3, adapter ubxn-5 and cdc-48.1; within the complex, interacts (via N-terminus) with ubxn-5 and with atx-3. Forms a complex composed of deubiquitinating enzyme atx-3, E4 ubiquitin-protein ligase ufd-2 and cdc-48.1; within the complex, interacts with atx-3 and (via DDDLYN motif) with ufd-2. Interacts (via N-terminus) with atx-3 (via RRDR motif); the interaction is not required for atx-3 enzymatic activity. Forms a complex composed of cdc-48.1, myosin chaperone unc-45, ubiquitin-protein ligases ufd-2 and chn-1; within the complex, interacts (via DDDLYN motif) with ufd-2 and targets myosin chaperone unc-45 for proteasomal degradation. Forms a complex composed of ubxn-3, ufd-1, npl-4.1 and cdc-48.1; within the complex, interacts (via N-terminus) with ubxn-3 (via FPK motif) and with ufd-1. Forms a complex composed of ubxn-3, cdc-48.1 and/or cdc-48.2 and substrate cdt-1. Interacts (via N-terminus) with ubxn-1. Interacts (via N-terminus) with ubxn-2. Interacts (via N-terminus) with ubxn-4. Interacts with ubxn-6. Interacts with ufd-3. Does not interact with air-2. In terms of tissue distribution, expressed in germ cells and spermatheca. Expressed in body wall muscles.

The protein resides in the cytoplasm. It localises to the perinuclear region. The catalysed reaction is ATP + H2O = ADP + phosphate + H(+). Its activity is regulated as follows. The first ATP-binding region has low ATPase activity. The second ATP-binding region is responsible for ATPase activity. ATP binding to the first ATP-binding region induces intrinsic activity of the second ATP-binding region. While ATP binding to the first ATP-binding region appears to prevent ATP hydrolysis by the second ATP-binding region, ADP-binding to first region promotes the coordinate and cooperative ATPase cycle of the second ATP-binding region. ATP binding to the first ATP-binding region induces a conformational change, promoting the rotation of the first ATP-binding region relative to the second ATP-binding region in the hexamer. Inhibited by N-ethylmaleimide (NEM). Its function is as follows. ATP-dependent chaperone which probably uses the energy provided by ATP hydrolysis to generate mechanical force to unfold substrate proteins, disassemble protein complexes, and disaggregate protein aggregates. Can also prevent aggregation of unfolded proteins also in an ATP-independent manner. Targets polyubiquitinated proteins for proteasomal degradation by binding to 'Lys-48'-linked polyubiquitin chains. Involved in the cytoplasmic elimination of misfolded proteins exported from the ER. This pathway, known as ERAD, prevents the activation of the unfolded protein response (UPR) caused by the accumulation of misfolded proteins in the ER. In association with helicase him-6 and GTPase crp-1, regulates the unfolded protein response (UPR) following ER stress, probably independently of the ERAD pathway. Together with udf-2 and chn-1, regulates myosin assembly in body wall muscles by targeting myosin chaperone unc-45 for proteasomal degradation. Together with the ufd-1-npl-4 complex, controls the switch from spermatogenesis to oogenesis by regulating E3 ligase cul-2 complex-mediated tra-1 proteasomal degradation. During oocyte meiosis and together with cdc-48.2, required for chromosome condensation at the diakinesis phase in prophase I and for progression of metaphase I. During the first embryonic cell division, regulates DNA replication and thus chromosome segregation and decondensation, and nuclear envelope re-assembly. In S phase and in association with ufd-1, npl-4.1 and/or npl-4.2 and ubxn-3, ensures the degradation of DNA licensing factor cdt-1 after the initiation of DNA replication and thus the disassembly of the DNA replication CMG helicase complex by promoting the dissociation from chromatin of several of its components including cdc-45 and sld-5. Regulates ubxn-3 nuclear localization during S phase. During the first embryonic cell divisions and together with cdc-48.2, regulates the re-assembly of the nuclear envelope after mitosis possibly by inactivating kinase air-2, a component of the chromosomal passenger complex (CPC). However, in another study, cdc-48.1 does not appear to be implicated in the regulation of air-2. The polypeptide is Transitional endoplasmic reticulum ATPase homolog 1 (Caenorhabditis elegans).